The chain runs to 259 residues: Deoxyribose-phosphate aldolase (259 aa).

Asp-102 functions as the Proton donor/acceptor in the catalytic mechanism. Lys-167 (schiff-base intermediate with acetaldehyde) is an active-site residue. The active-site Proton donor/acceptor is the Lys-201.

This sequence belongs to the DeoC/FbaB aldolase family. DeoC type 2 subfamily.

It localises to the cytoplasm. The enzyme catalyses 2-deoxy-D-ribose 5-phosphate = D-glyceraldehyde 3-phosphate + acetaldehyde. The protein operates within carbohydrate degradation; 2-deoxy-D-ribose 1-phosphate degradation; D-glyceraldehyde 3-phosphate and acetaldehyde from 2-deoxy-alpha-D-ribose 1-phosphate: step 2/2. Catalyzes a reversible aldol reaction between acetaldehyde and D-glyceraldehyde 3-phosphate to generate 2-deoxy-D-ribose 5-phosphate. In Salmonella typhi, this protein is Deoxyribose-phosphate aldolase.